Consider the following 230-residue polypeptide: V-type proton ATPase subunit E (230 aa).

It belongs to the V-ATPase E subunit family. As to quaternary structure, V-ATPase is a heteromultimeric enzyme composed of a peripheral catalytic V1 complex (components A to H) attached to an integral membrane V0 proton pore complex (components: a, c, c', c'' and d).

Subunit of the peripheral V1 complex of vacuolar ATPase essential for assembly or catalytic function. V-ATPase is responsible for acidifying a variety of intracellular compartments in eukaryotic cells. This chain is V-type proton ATPase subunit E (VATE), found in Citrus limon (Lemon).